Here is a 447-residue protein sequence, read N- to C-terminus: Probable ribosomal RNA small subunit methyltransferase B (447 aa).

Residues Cys259–Lys265, Asp283, Asp310, and Asp329 each bind S-adenosyl-L-methionine. The Nucleophile role is filled by Cys382.

It belongs to the class I-like SAM-binding methyltransferase superfamily. RsmB/NOP family.

It is found in the cytoplasm. The enzyme catalyses cytidine(967) in 16S rRNA + S-adenosyl-L-methionine = 5-methylcytidine(967) in 16S rRNA + S-adenosyl-L-homocysteine + H(+). Its function is as follows. Specifically methylates the cytosine at position 967 (m5C967) of 16S rRNA. The polypeptide is Probable ribosomal RNA small subunit methyltransferase B (Bacillus subtilis (strain 168)).